The sequence spans 158 residues: Transcription elongation factor GreA (158 aa).

Residues 46-66 (AEYEAAKERQGFIEGRISELE) adopt a coiled-coil conformation.

Belongs to the GreA/GreB family.

Its function is as follows. Necessary for efficient RNA polymerase transcription elongation past template-encoded arresting sites. The arresting sites in DNA have the property of trapping a certain fraction of elongating RNA polymerases that pass through, resulting in locked ternary complexes. Cleavage of the nascent transcript by cleavage factors such as GreA or GreB allows the resumption of elongation from the new 3'terminus. GreA releases sequences of 2 to 3 nucleotides. The polypeptide is Transcription elongation factor GreA (Neisseria meningitidis serogroup B (strain ATCC BAA-335 / MC58)).